The chain runs to 370 residues: Phosphoserine aminotransferase (370 aa).

Arg-42 provides a ligand contact to L-glutamate. Residues Trp-108, Thr-158, Asp-182, and Gln-205 each coordinate pyridoxal 5'-phosphate. N6-(pyridoxal phosphate)lysine is present on Lys-206. 247-248 (NT) provides a ligand contact to pyridoxal 5'-phosphate.

Belongs to the class-V pyridoxal-phosphate-dependent aminotransferase family. SerC subfamily. In terms of assembly, homodimer. Requires pyridoxal 5'-phosphate as cofactor.

The protein resides in the cytoplasm. The enzyme catalyses O-phospho-L-serine + 2-oxoglutarate = 3-phosphooxypyruvate + L-glutamate. It catalyses the reaction 4-(phosphooxy)-L-threonine + 2-oxoglutarate = (R)-3-hydroxy-2-oxo-4-phosphooxybutanoate + L-glutamate. It functions in the pathway amino-acid biosynthesis; L-serine biosynthesis; L-serine from 3-phospho-D-glycerate: step 2/3. It participates in cofactor biosynthesis; pyridoxine 5'-phosphate biosynthesis; pyridoxine 5'-phosphate from D-erythrose 4-phosphate: step 3/5. In terms of biological role, catalyzes the reversible conversion of 3-phosphohydroxypyruvate to phosphoserine and of 3-hydroxy-2-oxo-4-phosphonooxybutanoate to phosphohydroxythreonine. In Albidiferax ferrireducens (strain ATCC BAA-621 / DSM 15236 / T118) (Rhodoferax ferrireducens), this protein is Phosphoserine aminotransferase.